A 103-amino-acid polypeptide reads, in one-letter code: uncharacterized protein (103 aa).

This is an uncharacterized protein from Escherichia coli (strain K12).